The primary structure comprises 118 residues: Probable FK506-binding protein (118 aa).

Positions 33–118 (GGEVEVHYVG…LVFIIDLISA (86 aa)) constitute a PPIase FKBP-type domain.

This sequence belongs to the FKBP-type PPIase family.

It catalyses the reaction [protein]-peptidylproline (omega=180) = [protein]-peptidylproline (omega=0). PPIases accelerate the folding of proteins. The polypeptide is Probable FK506-binding protein (Corynebacterium glutamicum (strain ATCC 13032 / DSM 20300 / JCM 1318 / BCRC 11384 / CCUG 27702 / LMG 3730 / NBRC 12168 / NCIMB 10025 / NRRL B-2784 / 534)).